The following is an 82-amino-acid chain: Progonadoliberin-3 (82 aa).

The signal sequence occupies residues 1 to 23 (MDLSNRTVVQVVVLALVAQVTLS). Gln-24 bears the Pyrrolidone carboxylic acid mark. Glycine amide is present on Gly-33.

It belongs to the GnRH family. In terms of tissue distribution, brain.

It is found in the secreted. In terms of biological role, stimulates the secretion of gonadotropins. The protein is Progonadoliberin-3 (gnrh3) of Oncorhynchus nerka (Sockeye salmon).